We begin with the raw amino-acid sequence, 846 residues long: Inactive cap-specific mRNA (nucleoside-2'-O-)-methyltransferase 1B (846 aa).

The tract at residues 30–50 is disordered; the sequence is DDEDDFVDDPSPTEQKTKAEK. The region spanning 44–90 is the G-patch domain; the sequence is QKTKAEKKMERMGYKAGEGLGKNKQGIQEPIAISFREGKAGLGHEQW. In terms of domain architecture, RrmJ-type SAM-dependent 2'-O-MTase spans 184 to 413; the sequence is FFLNRSAMKT…ERFVVCKGLR (230 aa).

This is Inactive cap-specific mRNA (nucleoside-2'-O-)-methyltransferase 1B from Caenorhabditis briggsae.